Reading from the N-terminus, the 585-residue chain is RNA polymerase sigma factor RpoD (585 aa).

The disordered stretch occupies residues 67-93 (PASTLVPKDDSKPARKKKESSASTSGS). The sigma-70 factor domain-2 stretch occupies residues 351–421 (LVKANLRLVV…TRAISDQART (71 aa)). The short motif at 375 to 378 (DLIQ) is the Interaction with polymerase core subunit RpoC element. Positions 430-506 (EQVNKVIRET…DTEVETPVNA (77 aa)) are sigma-70 factor domain-3. The tract at residues 519-572 (VLHTLPAREQKVIRMRFGLDDGYPQTLEEVGYQFKVTRERIRQIEAKALRRLRH) is sigma-70 factor domain-4. Residues 545–564 (LEEVGYQFKVTRERIRQIEA) constitute a DNA-binding region (H-T-H motif).

Belongs to the sigma-70 factor family. RpoD/SigA subfamily. As to quaternary structure, interacts transiently with the RNA polymerase catalytic core.

The protein resides in the cytoplasm. Functionally, sigma factors are initiation factors that promote the attachment of RNA polymerase to specific initiation sites and are then released. This sigma factor is the primary sigma factor during exponential growth. In Leptospira interrogans serogroup Icterohaemorrhagiae serovar copenhageni (strain Fiocruz L1-130), this protein is RNA polymerase sigma factor RpoD.